Consider the following 444-residue polypeptide: Phosphoglucosamine mutase (444 aa).

S102 functions as the Phosphoserine intermediate in the catalytic mechanism. The Mg(2+) site is built by S102, D241, D243, and D245. At S102 the chain carries Phosphoserine.

The protein belongs to the phosphohexose mutase family. Requires Mg(2+) as cofactor. Activated by phosphorylation.

It catalyses the reaction alpha-D-glucosamine 1-phosphate = D-glucosamine 6-phosphate. Functionally, catalyzes the conversion of glucosamine-6-phosphate to glucosamine-1-phosphate. This Pasteurella multocida (strain Pm70) protein is Phosphoglucosamine mutase.